The chain runs to 378 residues: Erythronate-4-phosphate dehydrogenase (378 aa).

Substrate-binding residues include S45 and T66. The NAD(+) site is built by D146 and T175. R208 is an active-site residue. D232 is a binding site for NAD(+). The active site involves E237. Catalysis depends on H254, which acts as the Proton donor. G257 is an NAD(+) binding site. Position 258 (Y258) interacts with substrate.

The protein belongs to the D-isomer specific 2-hydroxyacid dehydrogenase family. PdxB subfamily. In terms of assembly, homodimer.

Its subcellular location is the cytoplasm. The enzyme catalyses 4-phospho-D-erythronate + NAD(+) = (R)-3-hydroxy-2-oxo-4-phosphooxybutanoate + NADH + H(+). Its pathway is cofactor biosynthesis; pyridoxine 5'-phosphate biosynthesis; pyridoxine 5'-phosphate from D-erythrose 4-phosphate: step 2/5. Its function is as follows. Catalyzes the oxidation of erythronate-4-phosphate to 3-hydroxy-2-oxo-4-phosphonooxybutanoate. This Citrobacter koseri (strain ATCC BAA-895 / CDC 4225-83 / SGSC4696) protein is Erythronate-4-phosphate dehydrogenase.